A 346-amino-acid chain; its full sequence is Holliday junction branch migration complex subunit RuvB (346 aa).

Positions 1 to 183 (MTEQRIIASS…FGIVQRLEFY (183 aa)) are large ATPase domain (RuvB-L). ATP-binding positions include isoleucine 22, arginine 23, glycine 64, lysine 67, threonine 68, threonine 69, 130–132 (EDF), arginine 173, tyrosine 183, and arginine 220. Threonine 68 serves as a coordination point for Mg(2+). The segment at 184–254 (SPQELTRIVI…VAQAAMQMLK (71 aa)) is small ATPAse domain (RuvB-S). The tract at residues 257-346 (PEGFDELDRR…PGIGEPGDLF (90 aa)) is head domain (RuvB-H). 3 residues coordinate DNA: arginine 293, arginine 312, and arginine 317.

It belongs to the RuvB family. As to quaternary structure, homohexamer. Forms an RuvA(8)-RuvB(12)-Holliday junction (HJ) complex. HJ DNA is sandwiched between 2 RuvA tetramers; dsDNA enters through RuvA and exits via RuvB. An RuvB hexamer assembles on each DNA strand where it exits the tetramer. Each RuvB hexamer is contacted by two RuvA subunits (via domain III) on 2 adjacent RuvB subunits; this complex drives branch migration. In the full resolvosome a probable DNA-RuvA(4)-RuvB(12)-RuvC(2) complex forms which resolves the HJ.

It is found in the cytoplasm. The enzyme catalyses ATP + H2O = ADP + phosphate + H(+). Functionally, the RuvA-RuvB-RuvC complex processes Holliday junction (HJ) DNA during genetic recombination and DNA repair, while the RuvA-RuvB complex plays an important role in the rescue of blocked DNA replication forks via replication fork reversal (RFR). RuvA specifically binds to HJ cruciform DNA, conferring on it an open structure. The RuvB hexamer acts as an ATP-dependent pump, pulling dsDNA into and through the RuvAB complex. RuvB forms 2 homohexamers on either side of HJ DNA bound by 1 or 2 RuvA tetramers; 4 subunits per hexamer contact DNA at a time. Coordinated motions by a converter formed by DNA-disengaged RuvB subunits stimulates ATP hydrolysis and nucleotide exchange. Immobilization of the converter enables RuvB to convert the ATP-contained energy into a lever motion, pulling 2 nucleotides of DNA out of the RuvA tetramer per ATP hydrolyzed, thus driving DNA branch migration. The RuvB motors rotate together with the DNA substrate, which together with the progressing nucleotide cycle form the mechanistic basis for DNA recombination by continuous HJ branch migration. Branch migration allows RuvC to scan DNA until it finds its consensus sequence, where it cleaves and resolves cruciform DNA. This is Holliday junction branch migration complex subunit RuvB from Xanthomonas axonopodis pv. citri (strain 306).